Reading from the N-terminus, the 1163-residue chain is Reticulon-4 (1163 aa).

Met-1 is modified (N-acetylmethionine). Disordered regions lie at residues 1–184 (MEDI…AASE) and 244–270 (SAVS…RATN). Topologically, residues 1 to 989 (MEDIDQSSLV…LYWRDIKKTG (989 aa)) are cytoplasmic. Ser-7 and Ser-16 each carry phosphoserine. Positions 7–16 (SSLVSSSTDS) are enriched in low complexity. A compositionally biased stretch (acidic residues) spans 31 to 55 (EPEDEEDEEEEEDEEEDDEDLEELE). Over residues 62-79 (AAGLSAAAVPPAAAAPLL) the composition is skewed to low complexity. Residues 87–101 (PPAPRGPLPAAPPAA) are compositionally biased toward pro residues. Ser-107 is modified (phosphoserine). A compositionally biased stretch (pro residues) spans 138–147 (ARPPPPPPAG). Ser-149, Ser-169, and Ser-171 each carry phosphoserine. Phosphoserine is present on residues Ser-329, Ser-333, and Ser-343. Phosphothreonine is present on Thr-347. Positions 406 to 423 (DSLEQKSLGKDSEGRNED) are enriched in basic and acidic residues. Disordered stretches follow at residues 406-437 (DSLE…KDSS) and 454-474 (TANT…DEKK). Ser-425 is modified (phosphoserine). The residue at position 429 (Thr-429) is a Phosphothreonine. The span at 461–474 (LEDHTSENKTDEKK) shows a compositional bias: basic and acidic residues. Residues Ser-488, Ser-689, Ser-726, Ser-766, and Ser-830 each carry the phosphoserine modification. Position 832 is a phosphothreonine (Thr-832). A phosphoserine mark is found at Ser-855, Ser-922, and Ser-962. The Reticulon domain maps to 976-1163 (VVDLLYWRDI…KIPGLKRKAD (188 aa)). The helical transmembrane segment at 990 to 1010 (VVFGASLFLLLSLTVFSIVSV) threads the bilayer. Over 1011 to 1104 (TAYIALALLS…LMWVFTYVGA (94 aa)) the chain is Lumenal. Lys-1075 carries the N6-acetyllysine modification. The chain crosses the membrane as a helical span at residues 1105–1125 (LFNGLTLLILALISLFSIPVI). Residues 1126 to 1163 (YERHQVQIDHYLGLANKSVKDAMAKIQAKIPGLKRKAD) lie on the Cytoplasmic side of the membrane.

Binds to RTN4R. Interacts with ATL1. Interacts with TMEM170A. Interacts with RTN4IP1. In terms of assembly, interacts in trans with CNTNAP1. Interacts with REEP5. Interacts with synaptic plasticity regulator PANTS; the interaction results in enhanced RTN4-mediated inhibition of AMPA receptor clustering. Interacts with GPR50. As to quaternary structure, homodimer. Interacts with BAD/Bcl-xl and BCL2. Interact with RTN3. Interacts with NGBR. Interacts with SPTLC1. Interacts with GRAMD4. Interacts with CDH5. Interacts with BACE1 and BACE2. Interacts with REEP5. Interacts with RETREG3. Interacts with BACE1 and BACE2. Interacts with TMEM33. Isoforms A, B and C are present in optic nerve, spinal cord and cerebral cortex. Isoforms A and B are present in dorsal root ganglion, sciatic nerve and PC12 cells after longer exposure. Isoforms B and C are detected in kidney, cartilage, skin, lung and spleen. Isoform C is expressed at high level in skeletal muscle. In adult animals isoform A is expressed mainly in the nervous system.

Its subcellular location is the endoplasmic reticulum membrane. The protein resides in the cell membrane. It is found in the synapse. The protein localises to the cell junction. Its function is as follows. Required to induce the formation and stabilization of endoplasmic reticulum (ER) tubules. They regulate membrane morphogenesis in the ER by promoting tubular ER production. They influence nuclear envelope expansion, nuclear pore complex formation and proper localization of inner nuclear membrane proteins. However each isoform have specific functions mainly depending on their tissue expression specificities. In terms of biological role, developmental neurite growth regulatory factor with a role as a negative regulator of axon-axon adhesion and growth, and as a facilitator of neurite branching. Regulates neurite fasciculation, branching and extension in the developing nervous system. Involved in down-regulation of growth, stabilization of wiring and restriction of plasticity in the adult CNS. Regulates the radial migration of cortical neurons via an RTN4R-LINGO1 containing receptor complex. Acts as a negative regulator of central nervous system angiogenesis. Inhibits spreading, migration and sprouting of primary brain microvascular endothelial cells (MVECs). Also induces the retraction of MVECs lamellipodia and filopodia in a ROCK pathway-dependent manner. Mainly function in endothelial cells and vascular smooth muscle cells, is also involved in immune system regulation. Modulator of vascular remodeling, promotes the migration of endothelial cells but inhibits the migration of vascular smooth muscle cells. Regulates endothelial sphingolipid biosynthesis with direct effects on vascular function and blood pressure. Inhibits serine palmitoyltransferase, SPTLC1, the rate-limiting enzyme of the novo sphingolipid biosynthetic pathway, thereby controlling production of endothelial sphingosine-1-phosphate (S1P). Required to promote macrophage homing and functions such as cytokine/chemokine gene expression involved in angiogenesis, arteriogenesis and tissue repair. Mediates ICAM1 induced transendothelial migration of leukocytes such as monocytes and neutrophils and acute inflammation. Necessary for immune responses triggered by nucleic acid sensing TLRs, such as TLR9, is required for proper TLR9 location to endolysosomes. Also involved in immune response to LPS. Plays a role in liver regeneration through the modulation of hepatocytes proliferation. Reduces the anti-apoptotic activity of Bcl-xl and Bcl-2. This is likely consecutive to their change in subcellular location, from the mitochondria to the endoplasmic reticulum, after binding and sequestration. With isoform C, inhibits BACE1 activity and amyloid precursor protein processing. Functionally, regulates cardiomyocyte apoptosis upon hypoxic conditions. With isoform B, inhibits BACE1 activity and amyloid precursor protein processing. This Rattus norvegicus (Rat) protein is Reticulon-4 (Rtn4).